A 1556-amino-acid polypeptide reads, in one-letter code: Lysine-specific demethylase 5C (1556 aa).

In terms of domain architecture, JmjN spans 14–55 (CPVFEPSWAEFRDPLGYIAKIRPIAEKSGICKIRPPADWQPP). Positions 79–169 (TRVKLNYLDQ…IVYPYEMYQS (91 aa)) constitute an ARID domain. Residues 197 to 207 (LRQSVQPSKFN) show a composition bias toward polar residues. The interval 197-227 (LRQSVQPSKFNSYGRRAKRLQPDPEPTEEDI) is disordered. Glycyl lysine isopeptide (Lys-Gly) (interchain with G-Cter in SUMO2) cross-links involve residues K205, K229, K244, and K274. The segment at 257–303 (LRKKDKEGPECPPTVVVKEESGGDVKVESTSPKTFLESKEELSHSPE) is disordered. Residues 273–283 (VKEESGGDVKV) show a composition bias toward basic and acidic residues. S287 carries the post-translational modification Phosphoserine. K295 is covalently cross-linked (Glycyl lysine isopeptide (Lys-Gly) (interchain with G-Cter in SUMO2)). 2 positions are modified to phosphoserine: S301 and S317. The PHD-type 1 zinc-finger motif lies at 324-374 (SYVCRMCSRGDEDDKLLLCDGCDDNYHIFCLLPPLPEIPKGVWRCPKCVMA). The region spanning 468–634 (EYATSGWNLN…AGRQCIEHYR (167 aa)) is the JmjC domain. Fe cation contacts are provided by H514, D517, and H602. Phosphoserine occurs at positions 893 and 897. Residue K1127 forms a Glycyl lysine isopeptide (Lys-Gly) (interchain with G-Cter in SUMO2) linkage. The PHD-type 2 zinc finger occupies 1185–1250 (TSVCVCGQVP…KFLCPLCMRS (66 aa)). Disordered stretches follow at residues 1315 to 1362 (LQAE…SPEK) and 1441 to 1556 (ERHG…QQQL). The span at 1335-1345 (PLREGSGKDMP) shows a compositional bias: basic and acidic residues. S1359 is modified (phosphoserine). Positions 1445-1460 (SRARGRALERRRRRKV) are enriched in basic residues. The segment covering 1461-1478 (DRGGEGDDPAREELEPKR) has biased composition (basic and acidic residues). Residues 1485-1500 (EAEEAQEEEELEEETG) show a composition bias toward acidic residues. 2 stretches are compositionally biased toward polar residues: residues 1513–1522 (SPSTQENQNG) and 1530–1540 (SGPSAPFSTLS). Residues 1541 to 1556 (PQLHVPCPQQPPQQQL) are compositionally biased toward low complexity.

Belongs to the JARID1 histone demethylase family. Part of two distinct complexes, one containing E2F6, and the other containing REST. Interacts with ZMYND8. Fe(2+) serves as cofactor.

It localises to the nucleus. The catalysed reaction is N(6),N(6),N(6)-trimethyl-L-lysyl(4)-[histone H3] + 3 2-oxoglutarate + 3 O2 = L-lysyl(4)-[histone H3] + 3 formaldehyde + 3 succinate + 3 CO2. Functionally, histone demethylase that specifically demethylates 'Lys-4' of histone H3, thereby playing a central role in histone code. Does not demethylate histone H3 'Lys-9', H3 'Lys-27', H3 'Lys-36', H3 'Lys-79' or H4 'Lys-20'. Demethylates trimethylated and dimethylated but not monomethylated H3 'Lys-4'. Participates in transcriptional repression of neuronal genes by recruiting histone deacetylases and REST at neuron-restrictive silencer elements. Represses the CLOCK-BMAL1 heterodimer-mediated transcriptional activation of the core clock component PER2. The sequence is that of Lysine-specific demethylase 5C (KDM5C) from Canis lupus familiaris (Dog).